We begin with the raw amino-acid sequence, 451 residues long: UPF0210 protein NMCC_1554 (451 aa).

It belongs to the UPF0210 family. Homodimer.

The chain is UPF0210 protein NMCC_1554 from Neisseria meningitidis serogroup C (strain 053442).